The primary structure comprises 57 residues: MFKYTRFEKARIIGARALQISMGAPVLIDVPPGITPLEAAILEFEKGVIPITVIRPS.

Belongs to the archaeal Rpo6/eukaryotic RPB6 RNA polymerase subunit family. As to quaternary structure, part of the RNA polymerase complex.

The protein localises to the cytoplasm. The catalysed reaction is RNA(n) + a ribonucleoside 5'-triphosphate = RNA(n+1) + diphosphate. In terms of biological role, DNA-dependent RNA polymerase (RNAP) catalyzes the transcription of DNA into RNA using the four ribonucleoside triphosphates as substrates. The polypeptide is DNA-directed RNA polymerase subunit Rpo6 (Pyrococcus furiosus (strain ATCC 43587 / DSM 3638 / JCM 8422 / Vc1)).